We begin with the raw amino-acid sequence, 493 residues long: MDRFILSLDEGTTSARAIIFDRESNVLGVGQYEFPQHYPRPGWVEHDPNEIWEAQFRAIKTAIERAKIEPTQIAAIGVTNQRETTIVWDKSGKPLHNAIVWQCRRTAEMVEEIKREYSEVIKEKTGLVPDAYFSASKLKWLLDNVPGLREKAEKGEVLFGTVDTFLIYRLTGEHVTDYSNASRTMLFNIKKLEWDDELLEIFGVPEGVLPEVKESSEIYGYTKKELLGAEIPVSGDAGDQQAALFGQAAFETGMVKATYGTGNFILANTGKTVRYSDNLLTTVAWGLNGKVSYALEGSVFITGAAVQWLRDGIKIIKSAPETEELARKLQSNEGVYFVPAFVGLGAPYWDQFARGLIIGITRGTGREHLARATLEAIAYLTRDVVEEMERLVGIKELRVDGGATANDFLMQFQADILNRRVVRPVVKETTALGAAYLAGLAVDYWEGLEEIKSLWKAEKVFGPVMDEETRRKLYRGWKEAVKRAMGWAKVVDA.

Thr12 provides a ligand contact to ADP. The ATP site is built by Thr12, Thr13, and Ser14. Thr12 contributes to the sn-glycerol 3-phosphate binding site. Arg16 lines the ADP pocket. Residues Arg82, Glu83, Tyr132, and Asp239 each contribute to the sn-glycerol 3-phosphate site. Glycerol contacts are provided by Arg82, Glu83, Tyr132, Asp239, and Gln240. The ADP site is built by Thr261 and Gly303. ATP contacts are provided by Thr261, Gly303, Gln307, and Gly402. ADP is bound by residues Gly402 and Asn406.

It belongs to the FGGY kinase family.

It carries out the reaction glycerol + ATP = sn-glycerol 3-phosphate + ADP + H(+). It functions in the pathway polyol metabolism; glycerol degradation via glycerol kinase pathway; sn-glycerol 3-phosphate from glycerol: step 1/1. Its function is as follows. Key enzyme in the regulation of glycerol uptake and metabolism. Catalyzes the phosphorylation of glycerol to yield sn-glycerol 3-phosphate. This Thermococcus onnurineus (strain NA1) protein is Glycerol kinase.